Here is a 149-residue protein sequence, read N- to C-terminus: Protein E4.1 (149 aa).

This is Protein E4.1 from Snake adenovirus serotype 1 (SnAdV-1).